The primary structure comprises 512 residues: Dihydroniloticin synthase CYP71CD1 (512 aa).

A helical membrane pass occupies residues 7 to 27 (YFTVTSLLVFLTFLLRLVWGW). Cysteine 451 serves as a coordination point for heme.

Belongs to the cytochrome P450 family. Requires heme as cofactor. As to expression, accumulates in mature fruits and in juice vesicles.

The protein localises to the membrane. It carries out the reaction tirucalla-7,24-dien-3beta-ol + 2 reduced [NADPH--hemoprotein reductase] + 2 O2 = dihydroniloticin + 2 oxidized [NADPH--hemoprotein reductase] + 2 H2O + 2 H(+). It functions in the pathway secondary metabolite biosynthesis; terpenoid biosynthesis. Its function is as follows. Monooxygenase involved in the biosynthesis of limonoids triterpene natural products such as limonin, a compound with insecticidal activity responsible for the bitter taste in citrus. Catalyzes the conversion of tirucalladienol to dihydroniloticin. The sequence is that of Dihydroniloticin synthase CYP71CD1 from Citrus sinensis (Sweet orange).